Reading from the N-terminus, the 423-residue chain is Serine--tRNA ligase (423 aa).

231-233 (TAE) serves as a coordination point for L-serine. 262–264 (RSE) is an ATP binding site. E285 serves as a coordination point for L-serine. An ATP-binding site is contributed by 349–352 (EISS). S384 provides a ligand contact to L-serine.

It belongs to the class-II aminoacyl-tRNA synthetase family. Type-1 seryl-tRNA synthetase subfamily. As to quaternary structure, homodimer. The tRNA molecule binds across the dimer.

Its subcellular location is the cytoplasm. It carries out the reaction tRNA(Ser) + L-serine + ATP = L-seryl-tRNA(Ser) + AMP + diphosphate + H(+). The enzyme catalyses tRNA(Sec) + L-serine + ATP = L-seryl-tRNA(Sec) + AMP + diphosphate + H(+). It participates in aminoacyl-tRNA biosynthesis; selenocysteinyl-tRNA(Sec) biosynthesis; L-seryl-tRNA(Sec) from L-serine and tRNA(Sec): step 1/1. In terms of biological role, catalyzes the attachment of serine to tRNA(Ser). Is also able to aminoacylate tRNA(Sec) with serine, to form the misacylated tRNA L-seryl-tRNA(Sec), which will be further converted into selenocysteinyl-tRNA(Sec). This Acinetobacter baumannii (strain AB307-0294) protein is Serine--tRNA ligase.